Consider the following 436-residue polypeptide: Indole-3-acetyl-aspartic acid hydrolase (436 aa).

It belongs to the peptidase M20 family. As to quaternary structure, monomer.

It catalyses the reaction (indol-3-yl)acetyl-L-aspartate + H2O = (indol-3-yl)acetate + L-aspartate. Its function is as follows. Hydrolyzes indole-3-acetyl-aspartate (IAA-Asp) to indole-3-acetic acid (IAA). Shows an exclusively high substrate specificity for IAA-Asp. This Enterobacter agglomerans (Erwinia herbicola) protein is Indole-3-acetyl-aspartic acid hydrolase.